A 757-amino-acid polypeptide reads, in one-letter code: RNA-directed RNA polymerase catalytic subunit (757 aa).

The tract at residues 52-82 (KGKWTTNTETGAPQLNPIDGPLPEDNEPSGY) is disordered. The span at 55–64 (WTTNTETGAP) shows a compositional bias: polar residues. 2 consecutive short sequence motifs (nuclear localization signal) follow at residues 187-195 (RKRRVRDNM) and 203-216 (RTIG…NKKS). Positions 249-256 (RGFVYFVE) are promoter-binding site. Positions 286 to 483 (VRKMMTNSQD…GINMSKKKSY (198 aa)) constitute a RdRp catalytic domain.

This sequence belongs to the influenza viruses polymerase PB1 family. Influenza RNA polymerase is composed of three subunits: PB1, PB2 and PA. Interacts (via N-terminus) with PA (via C-terminus). Interacts (via C-terminus) with PB2 (via N-terminus); this interaction is essential for transcription initiation. Post-translationally, phosphorylated by host PRKCA.

It is found in the host nucleus. Its subcellular location is the host cytoplasm. The catalysed reaction is RNA(n) + a ribonucleoside 5'-triphosphate = RNA(n+1) + diphosphate. Its function is as follows. RNA-dependent RNA polymerase which is responsible for replication and transcription of virus RNA segments. The transcription of viral mRNAs occurs by a unique mechanism called cap-snatching. 5' methylated caps of cellular mRNAs are cleaved after 10-13 nucleotides by PA. In turn, these short capped RNAs are used as primers by PB1 for transcription of viral mRNAs. During virus replication, PB1 initiates RNA synthesis and copy vRNA into complementary RNA (cRNA) which in turn serves as a template for the production of more vRNAs. This is RNA-directed RNA polymerase catalytic subunit from Influenza A virus (strain A/Chicken/Shantou/4231/2003 H5N1 genotype V).